The primary structure comprises 1906 residues: Replicase polyprotein (1906 aa).

Residues 513–692 (MRYLTEVFKS…DEFTKMCWSK (180 aa)) form the SF3 helicase domain. 544–551 (GESGRGKS) is an ATP binding site. A protease region spans residues 1124–1350 (KDQVAQKLIT…KDLIRAFSKI (227 aa)). The region spanning 1126–1343 (QVAQKLITNR…YAESISQKDL (218 aa)) is the Peptidase C3 domain. Catalysis depends on for picornain 3C-like protease activity residues H1171, E1213, and C1305. A RdRp catalytic domain is found at 1638-1772 (PKVIAGDFST…NFSDEVSEWF (135 aa)).

Post-translationally, specific enzymatic cleavages in vivo by the viral protease yield a variety of precursors and mature proteins.

It carries out the reaction RNA(n) + a ribonucleoside 5'-triphosphate = RNA(n+1) + diphosphate. Functionally, replicase polyprotein contains helicase, VPg, protease and RNA-directed RNA polymerase functions. In terms of biological role, RNA-directed RNA polymerase replicates genomic and antigenomic RNA and transcribes the vial genome. The protease generates mature viral proteins from the precursor polyprotein. Its function is as follows. VPg is covalently linked to the 5'-end of genomic RNA. In Apis mellifera (Honeybee), this protein is Replicase polyprotein.